A 330-amino-acid chain; its full sequence is Protoheme IX farnesyltransferase (330 aa).

9 helical membrane-spanning segments follow: residues 33 to 53 (VMTLVVFTAFAGLIAAPVDAD), 54 to 74 (PFLAFMSILCLAVGAGAAGAL), 101 to 121 (VSNAYGFGVVASILSVLLMAL), 126 to 146 (LAAGLLAFSIFFYAVIYTMIL), 154 to 174 (IVIGGAAGAFPPMIGWVAATG), 180 to 200 (AVILFMIIFLWTPPHSWALAL), 227 to 247 (ILLYSIVLVIFAGAPVLTGLG), 250 to 270 (VYGATSLGGGALFLLLAWRIF), and 308 to 328 (VLFAALIVEHAFGAYVAIPGV).

This sequence belongs to the UbiA prenyltransferase family. Protoheme IX farnesyltransferase subfamily. In terms of assembly, interacts with CtaA.

It is found in the cell inner membrane. It catalyses the reaction heme b + (2E,6E)-farnesyl diphosphate + H2O = Fe(II)-heme o + diphosphate. Its pathway is porphyrin-containing compound metabolism; heme O biosynthesis; heme O from protoheme: step 1/1. In terms of biological role, converts heme B (protoheme IX) to heme O by substitution of the vinyl group on carbon 2 of heme B porphyrin ring with a hydroxyethyl farnesyl side group. The chain is Protoheme IX farnesyltransferase from Maricaulis maris (strain MCS10) (Caulobacter maris).